Reading from the N-terminus, the 1158-residue chain is Voltage-gated inwardly rectifying potassium channel KCNH2 (1158 aa).

Topologically, residues 1-402 (MPVRRGHVAP…RIHRWTILHY (402 aa)) are cytoplasmic. The region spanning 17–88 (TIIRKFEGQS…AAQIAQALLG (72 aa)) is the PAS domain. The 53-residue stretch at 92 to 144 (RKVEIAFYRKDGSCFLCLVDVVPVKNEDGAVIMFILNFEVVMEKDMVGSPTHD) folds into the PAC domain. Residues 232-314 (RALVGSSSPP…GAMHPLRGGL (83 aa)) are disordered. Ser-239 is modified (phosphoserine). A compositionally biased stretch (polar residues) spans 258–269 (PDASGSSCSLAR). Phosphoserine occurs at positions 283, 284, 319, and 350. A helical transmembrane segment spans residues 403–423 (SPFKAVWDWLILLLVIYTAVF). The Extracellular segment spans residues 424-449 (TPYSAAFLLKETEEGPPAPDCGYACQ). A helical transmembrane segment spans residues 450 to 470 (PLAVVDFIVDIMFIVDILINF). The Cytoplasmic segment spans residues 471 to 494 (RTTYVNANEEVVSHPGRIAVHYFK). The chain crosses the membrane as a helical span at residues 495-515 (GWFLIDMVAAIPFDLLIFGSG). The Extracellular portion of the chain corresponds to 516–519 (SEEL). Residues 520 to 540 (IGLLKTARLLRLVRVARKLDR) traverse the membrane as a helical; Voltage-sensor segment. Over 541-546 (YSEYGA) the chain is Cytoplasmic. A helical membrane pass occupies residues 547–567 (AVLFLLMCTFALIAHWLACIW). At 568-610 (YAIGNMEQPHMDSRIGWLHNLGDQIGKPYNSSGLGGPSIKDKY) the chain is on the extracellular side. Asn-597 is a glycosylation site (N-linked (GlcNAc...) asparagine). Positions 611 to 631 (VTALYFTFSSLTSVGFGNVSP) form an intramembrane region, pore-forming. Positions 623–628 (SVGFGN) match the Selectivity filter motif. Topologically, residues 632-637 (NTNSEK) are extracellular. Residues 638–658 (IFSICVMLIGSLMYASIFGNV) form a helical membrane-spanning segment. The Cytoplasmic segment spans residues 659–1158 (SAIIQRLYSG…LHRHGSDPGS (500 aa)). Residues 741-841 (PFRGATKGCL…IHRDDLLEVL (101 aa)) form a cNMP-binding domain region. The disordered stretch occupies residues 869–987 (GSPGSAELEG…KSSDTCNPLS (119 aa)). Residues Ser-870 and Ser-873 each carry the phosphoserine modification. The span at 882–891 (RQRKRKLSFR) shows a compositional bias: basic residues. Positions 910–926 (GRAGAGPSGRGRPGGPW) are enriched in gly residues. Residues 927–938 (GESPSSGPSSPE) are compositionally biased toward low complexity. Residues 959-969 (SPRPPGEPPGG) are compositionally biased toward pro residues. The residue at position 1013 (Arg-1013) is an Omega-N-methylarginine. Positions 1034 to 1061 (RGDVEGRLDALQRQLNRLETRLSADMAT) form a coiled coil. The segment at 1116-1158 (FEELPPGAPELPQDGPPRRLSLPGQLGALTSQPLHRHGSDPGS) is disordered. At Ser-1136 the chain carries Phosphoserine.

It belongs to the potassium channel family. H (Eag) (TC 1.A.1.20) subfamily. Kv11.1/KCNH2 sub-subfamily. As to quaternary structure, the potassium channel is probably composed of a homo- or heterotetrameric complex of pore-forming alpha subunits that can associate with modulating beta subunits. Interacts with DNAJB12 and DNAJB14; chaperones DNAJB12 and DNAJB14 promote tetramerization. Heteromultimer with KCNH6/ERG2 and KCNH7/ERG3. Interacts with ALG10B. Forms a stable complex with KCNE1 or KCNE2, and that this heteromultimerization regulates Inward rectifier potassium channel activity. Interacts with CANX. The core-glycosylated, but not the fully glycosylated form interacts with RNF207. Interacts with NDFIP1 and NDFIP2; this interaction decreases the cell membrane expression by targeting KCNH2, through interaction with NEDD4L, for the degradation through the multivesicular bodies (MVBs)-lysosomal pathway. Post-translationally, phosphorylated on serine and threonine residues. Phosphorylation by PKA inhibits ion conduction. As to expression, highly expressed in left and right atria of the heart, in cortex and hippocampus; detected at intermediate levels in left and right ventricle, Purkinje fibers, cerebellum, thalamus and basal ganglia; detected at low levels in liver, spleen and kidney.

The protein localises to the cell membrane. It catalyses the reaction K(+)(in) = K(+)(out). Its function is as follows. Pore-forming (alpha) subunit of voltage-gated inwardly rectifying potassium channel. Characterized by unusual gating kinetics by producing relatively small outward currents during membrane depolarization and large inward currents during subsequent repolarization which reflect a rapid inactivation during depolarization and quick recovery from inactivation but slow deactivation (closing) during repolarization. Channel properties are modulated by cAMP and subunit assembly. Forms a stable complex with KCNE1 or KCNE2, and that this heteromultimerization regulates inward rectifier potassium channel activity. The chain is Voltage-gated inwardly rectifying potassium channel KCNH2 from Canis lupus familiaris (Dog).